Here is a 259-residue protein sequence, read N- to C-terminus: Small ribosomal subunit protein uS7m (259 aa).

A mitochondrion-targeting transit peptide spans 1 to 39 (MLRLIKQPLFRCASSGHLMKESLVFIHQTRTFQVGKFTS). T157 is subject to Phosphothreonine.

Belongs to the universal ribosomal protein uS7 family. In terms of assembly, component of the mitochondrial small ribosomal subunit (mt-SSU). Mature yeast 74S mitochondrial ribosomes consist of a small (37S) and a large (54S) subunit. The 37S small subunit contains a 15S ribosomal RNA (15S mt-rRNA) and at least 32 different proteins. The 54S large subunit contains a 21S rRNA (21S mt-rRNA) and at least 45 different proteins.

It is found in the mitochondrion. Functionally, component of the mitochondrial ribosome (mitoribosome), a dedicated translation machinery responsible for the synthesis of mitochondrial genome-encoded proteins, including at least some of the essential transmembrane subunits of the mitochondrial respiratory chain. The mitoribosomes are attached to the mitochondrial inner membrane and translation products are cotranslationally integrated into the membrane. The protein is Small ribosomal subunit protein uS7m (rsm7) of Schizosaccharomyces pombe (strain 972 / ATCC 24843) (Fission yeast).